Here is a 653-residue protein sequence, read N- to C-terminus: Protein fem-1 homolog A (653 aa).

ANK repeat units follow at residues 2-31 (DLHT…REEL), 40-70 (SGGT…SVEA), 82-111 (EGAP…SVNR), 115-145 (TNST…DLEV), 149-178 (HGHT…QVNR), 182-211 (KGNT…RMER), and 214-243 (YGMT…AGDE). A Phosphoserine modification is found at serine 108. The interval 242 to 274 (DEQAQPGLARVQPQGARSSPEEPPSGESYESCC) is disordered. TPR repeat units lie at residues 282 to 316 (VEAL…RHQG) and 374 to 407 (SYYI…QQNN). 2 ANK repeats span residues 518–560 (NGFT…DPDS) and 564–593 (DNNT…HMDA).

Belongs to the fem-1 family. In terms of assembly, component of a CRL2 E3 ubiquitin-protein ligase complex, also named ECS (Elongin BC-CUL2/5-SOCS-box protein) complex, composed of CUL2, Elongin BC (ELOB and ELOC), RBX1 and substrate-specific adapter FEM1A. Interacts with PTGER4. Interacts with NFKB1; the interaction is direct. Post-translationally, phosphorylated; highly phosphorylated in myoblasts and myotubes. Phosphorylation at Ser-108 promotes PGE2-EP4-mediated inhibition of inflammation. Dephosphorylated by protein phosphatase 2A (PP2A).

The protein resides in the mitochondrion. It localises to the cytoplasm. The protein operates within protein modification; protein ubiquitination. In terms of biological role, substrate-recognition component of a Cul2-RING (CRL2) E3 ubiquitin-protein ligase complex of the DesCEND (destruction via C-end degrons) pathway, which recognizes a C-degron located at the extreme C terminus of target proteins, leading to their ubiquitination and degradation. The C-degron recognized by the DesCEND pathway is usually a motif of less than ten residues and can be present in full-length proteins, truncated proteins or proteolytically cleaved forms. The CRL2(FEM1A) complex specifically recognizes proteins with an arginine at the C-terminus: recognizes and binds proteins ending with -Lys/Arg-Xaa-Arg and -Lys/Arg-Xaa-Xaa-Arg C-degrons, such as SIL1 or OR51B2, leading to their ubiquitination and degradation. Involved in PGE2-EP4-mediated inhibition of inflammation of macrophages via interaction with NFKB1 and PTGER4. Promotes inflammation in brain microglia through MAP2K4/MKK4-mediated signaling. This Bos taurus (Bovine) protein is Protein fem-1 homolog A.